A 529-amino-acid chain; its full sequence is MNNARPIRRALLSVSDKTGILEFAQALHAQGVELLSTGGTARLLADNGVPVIEVSDYTGHPEIMDGRVKTLHPKVHGGILARRGIDEIVMEQNNIKPIDLVAVNLYPFAATVAQEGCTLADAIENIDIGGPTMVRSTAKNHKDTTIIVNAKDYGRVIAEMQSNEASTTLETRFDLAIAAFEHTAAYDGMIANYFGTKVPAHSNDECHEDSKFPRTYNTQLVKKQDLRYGENSHQTAAFYVDTNLDEASVATAVQLQGKALSYNNIADTDSALECVKEFDEPACVIVKHANPCGVAIGENLLEAYNRAFQTDPTSAFGGIIAFNGELDAATASAIVERQFVEVIIAPKVSQAARDVIAAKANVRLLECGEWAAKTTSLDYKRVNGGLLLQDRDQGMVGLDDVKVVSKRQPTAEEMKDLMFCWKVAKFVKSNAIVYAKNSMTIGVGAGQMSRVYSAKVAGIKAADEGLEVQNSVMASDAFFPFRDGIDAAAEAGISCIIQPGGSIRDEEIIAAADEHGMAMVFTGMRHFRH.

The MGS-like domain maps to 1 to 148; that stretch reads MNNARPIRRA…KNHKDTTIIV (148 aa).

It belongs to the PurH family.

The enzyme catalyses (6R)-10-formyltetrahydrofolate + 5-amino-1-(5-phospho-beta-D-ribosyl)imidazole-4-carboxamide = 5-formamido-1-(5-phospho-D-ribosyl)imidazole-4-carboxamide + (6S)-5,6,7,8-tetrahydrofolate. The catalysed reaction is IMP + H2O = 5-formamido-1-(5-phospho-D-ribosyl)imidazole-4-carboxamide. It functions in the pathway purine metabolism; IMP biosynthesis via de novo pathway; 5-formamido-1-(5-phospho-D-ribosyl)imidazole-4-carboxamide from 5-amino-1-(5-phospho-D-ribosyl)imidazole-4-carboxamide (10-formyl THF route): step 1/1. It participates in purine metabolism; IMP biosynthesis via de novo pathway; IMP from 5-formamido-1-(5-phospho-D-ribosyl)imidazole-4-carboxamide: step 1/1. The chain is Bifunctional purine biosynthesis protein PurH from Shewanella pealeana (strain ATCC 700345 / ANG-SQ1).